The chain runs to 1518 residues: WD repeat-containing protein 62 (1518 aa).

Ala2 carries the post-translational modification N-acetylalanine. Ser33 is subject to Phosphoserine. Thr46 bears the Phosphothreonine mark. Ser49 carries the phosphoserine modification. At Thr50 the chain carries Phosphothreonine. Ser52 carries the phosphoserine modification. WD repeat units lie at residues 109-150 (TARK…QVAE), 153-194 (GHKY…VVAS), 196-234 (KVSCRVIALSFSEDSSYFVTVGNRHVRFWFLEVSTETKV), 291-330 (INLKVSLSSCLCVSQELIFCGCTDGIVRIFQAHSLHYLAN), 357-396 (AVYPDTVALTFDPIHQWLSCVYKDHSIYIWDVKDINRVGK), 402-450 (FHSS…DSHW), 490-529 (DVKAGVRVMQVSPDGQHLASGDRSGNLRIHELHFMDELVK), 532-574 (AHDA…NLEQ), 578-618 (DHSS…DGLH), 626-665 (AEKTTLYDMDIDITQKYVAVACQDRNVRVYNTVNGKQKKC), 671-713 (GDEG…KMFG), and 714-752 (HSEIITSMKFTYDCHHLITVSGDSCVFIWHLGPEITNCM). Phosphoserine is present on Ser501. Over residues 762–772 (RQQQQHTNDKK) the composition is skewed to basic and acidic residues. 2 disordered regions span residues 762-824 (RQQQ…DPDP) and 908-935 (ASLLSESESPQEAGRGHPSFLPQQKESS). The segment covering 781–790 (TYVSTPSEIH) has biased composition (polar residues). Over residues 797-809 (QTEDDLEEECEPE) the composition is skewed to acidic residues. One copy of the WD 13 repeat lies at 803-846 (EEECEPEEMLKTPSKDSLDPDPRCLLTNGKLPLWAKRLLGDDDV). A compositionally biased stretch (basic and acidic residues) spans 810 to 824 (EMLKTPSKDSLDPDP). Residues 908 to 920 (ASLLSESESPQEA) are compositionally biased toward low complexity. Residue Ser944 is modified to Phosphoserine. The segment at 962-1055 (EVEAGPGDQQ…PSSSLPQTPE (94 aa)) is disordered. Composition is skewed to polar residues over residues 971–981 (QGDSYLRVSSD) and 1045–1054 (VPSSSLPQTP). At Thr1053 the chain carries Phosphothreonine. A phosphoserine mark is found at Ser1070, Ser1093, Ser1101, Ser1123, Ser1144, Ser1228, Ser1248, and Ser1249. The stretch at 1132 to 1173 (GGSQPRAGTGYASPDRTHVLAAGKAEETLEAWRPPPPCLTSL) is one WD 14 repeat. Residues 1255–1293 (SLGQELQAITTATTPSLDSEGQEPALRSWGNHEARANLR) form a WD 15 repeat. The residue at position 1268 (Thr1268) is a Phosphothreonine. Residues 1339–1377 (FRPSLPAPESPGLPAHPSNPQLPEARPGIPGGTASLLEP) are disordered.

Can form homodimers (via C-terminus). Interacts (via C-terminus) with MAPKBP1 (via C-terminus). Interacts with CDK5RAP2, CEP152, CEP63 and KIAA0753. CEP63, CDK5RAP2, CEP152, WDR62 are proposed to form a stepwise assembled complex at the centrosome forming a ring near parental centrioles. In terms of tissue distribution, present in fetal brain, enriched within the ventricular and subventricular zone (at protein level). In the embryonic brain it is expressed in mitotic neural precursor cells.

It localises to the nucleus. It is found in the cytoplasm. The protein resides in the cytoskeleton. Its subcellular location is the spindle pole. The protein localises to the microtubule organizing center. It localises to the centrosome. It is found in the centriole. Required for cerebral cortical development. Plays a role in neuronal proliferation and migration. Plays a role in mother-centriole-dependent centriole duplication; the function also seems to involve CEP152, CDK5RAP2 and CEP63 through a stepwise assembled complex at the centrosome that recruits CDK2 required for centriole duplication. This chain is WD repeat-containing protein 62 (WDR62), found in Homo sapiens (Human).